The primary structure comprises 271 residues: Na(+), Li(+), K(+)/H(+) antiporter subunit B (271 aa).

The next 7 membrane-spanning stretches (helical) occupy residues 2-22 (ILLT…AIIF), 36-56 (LPQV…FLVG), 94-114 (WVYL…PSLI), 130-150 (PFML…LGTW), 152-172 (IVMG…VIIQ), 193-213 (STIT…SIPG), and 216-236 (ALMD…ITVM). The disordered stretch occupies residues 252 to 271 (TPHLSYSKAPPPSKGDNNAL).

It belongs to the UmpA/UmpB family. Heterodimer composed of UmpA and UmpB.

Its subcellular location is the cell membrane. Its function is as follows. Part of a two-component antiporter that catalyzes the efflux of Na(+), Li(+) and K(+) in exchange for external protons. Shows a preference for Na(+), followed by K(+) and Li(+). In Vreelandella zhaodongensis (Halomonas zhaodongensis), this protein is Na(+), Li(+), K(+)/H(+) antiporter subunit B.